A 436-amino-acid chain; its full sequence is Acetylcholine receptor non-alpha chain (436 aa).

The Extracellular segment spans residues 1 to 195 (IIDVHEIDQI…IFYLELRRKP (195 aa)). Asparagine 62 carries N-linked (GlcNAc...) asparagine glycosylation. A disulfide bridge connects residues cysteine 89 and cysteine 103. A glycan (N-linked (GlcNAc...) asparagine) is linked at asparagine 140. 3 helical membrane-spanning segments follow: residues 196-219 (LFYT…AFYL), 227-245 (VTLC…LLLK), and 261-280 (YLLF…VISL). The Cytoplasmic portion of the chain corresponds to 281-404 (NLHFRRPSTH…WKFVARVLDR (124 aa)). Residues 405–423 (LFLLLFSIACFLGTILILF) form a helical membrane-spanning segment.

It belongs to the ligand-gated ion channel (TC 1.A.9) family. Acetylcholine receptor (TC 1.A.9.1) subfamily.

It is found in the postsynaptic cell membrane. The protein resides in the cell membrane. Functionally, after binding acetylcholine, the AChR responds by an extensive change in conformation that affects all subunits and leads to opening of an ion-conducting channel across the plasma membrane. The sequence is that of Acetylcholine receptor non-alpha chain from Onchocerca volvulus.